The primary structure comprises 188 residues: Ribosome-recycling factor (188 aa).

It belongs to the RRF family.

It is found in the cytoplasm. Responsible for the release of ribosomes from messenger RNA at the termination of protein biosynthesis. May increase the efficiency of translation by recycling ribosomes from one round of translation to another. This Blochmanniella pennsylvanica (strain BPEN) protein is Ribosome-recycling factor.